The sequence spans 380 residues: Probable protein phosphatase 2C 27 (380 aa).

A PPM-type phosphatase domain is found at 84–344; the sequence is RSGSCAEQGA…DNLTVIVVCF (261 aa). 4 residues coordinate Mn(2+): D128, G129, D292, and D335.

The protein belongs to the PP2C family. It depends on Mg(2+) as a cofactor. Requires Mn(2+) as cofactor. Expressed in roots, leaves, stems, flower, and trichomes.

It localises to the nucleus. The protein localises to the cytoplasm. The enzyme catalyses O-phospho-L-seryl-[protein] + H2O = L-seryl-[protein] + phosphate. It carries out the reaction O-phospho-L-threonyl-[protein] + H2O = L-threonyl-[protein] + phosphate. In terms of biological role, confers salt tolerance by triggering the expression of stress-responsive genes. The chain is Probable protein phosphatase 2C 27 from Arabidopsis thaliana (Mouse-ear cress).